Consider the following 294-residue polypeptide: 33 kDa chaperonin (294 aa).

2 disulfides stabilise this stretch: Cys238-Cys240 and Cys271-Cys274.

It belongs to the HSP33 family. In terms of processing, under oxidizing conditions two disulfide bonds are formed involving the reactive cysteines. Under reducing conditions zinc is bound to the reactive cysteines and the protein is inactive.

It is found in the cytoplasm. Functionally, redox regulated molecular chaperone. Protects both thermally unfolding and oxidatively damaged proteins from irreversible aggregation. Plays an important role in the bacterial defense system toward oxidative stress. The polypeptide is 33 kDa chaperonin (Thermoanaerobacter pseudethanolicus (strain ATCC 33223 / 39E) (Clostridium thermohydrosulfuricum)).